The following is a 264-amino-acid chain: Thymidylate synthase (264 aa).

Residue arginine 21 participates in dUMP binding. Position 51 (histidine 51) interacts with (6R)-5,10-methylene-5,6,7,8-tetrahydrofolate. 126–127 is a binding site for dUMP; the sequence is RR. The active-site Nucleophile is the cysteine 146. Residues 166 to 169, asparagine 177, and 207 to 209 each bind dUMP; these read RSAD and HLY. (6R)-5,10-methylene-5,6,7,8-tetrahydrofolate is bound at residue aspartate 169. Alanine 263 is a (6R)-5,10-methylene-5,6,7,8-tetrahydrofolate binding site.

It belongs to the thymidylate synthase family. Bacterial-type ThyA subfamily. In terms of assembly, homodimer.

It is found in the cytoplasm. It catalyses the reaction dUMP + (6R)-5,10-methylene-5,6,7,8-tetrahydrofolate = 7,8-dihydrofolate + dTMP. It participates in pyrimidine metabolism; dTTP biosynthesis. Functionally, catalyzes the reductive methylation of 2'-deoxyuridine-5'-monophosphate (dUMP) to 2'-deoxythymidine-5'-monophosphate (dTMP) while utilizing 5,10-methylenetetrahydrofolate (mTHF) as the methyl donor and reductant in the reaction, yielding dihydrofolate (DHF) as a by-product. This enzymatic reaction provides an intracellular de novo source of dTMP, an essential precursor for DNA biosynthesis. This is Thymidylate synthase from Cupriavidus necator (strain ATCC 17699 / DSM 428 / KCTC 22496 / NCIMB 10442 / H16 / Stanier 337) (Ralstonia eutropha).